Reading from the N-terminus, the 185-residue chain is TATA-box-binding protein 3 (185 aa).

A run of 2 repeats spans residues 7–84 (IENV…ANKL) and 100–178 (VQNI…RKEF).

This sequence belongs to the TBP family.

Its function is as follows. General factor that plays a role in the activation of archaeal genes transcribed by RNA polymerase. Binds specifically to the TATA box promoter element which lies close to the position of transcription initiation. This chain is TATA-box-binding protein 3, found in Methanosarcina acetivorans (strain ATCC 35395 / DSM 2834 / JCM 12185 / C2A).